We begin with the raw amino-acid sequence, 304 residues long: Thyroxine 5-deiodinase (304 aa).

A disordered region spans residues 1–22 (MPRQAASRLVVGEGEGPPGASG). Residues 1–42 (MPRQAASRLVVGEGEGPPGASGPAATMLRSLLLHSLRLCAQT) lie on the Cytoplasmic side of the membrane. The helical; Signal-anchor for type II membrane protein transmembrane segment at 43 to 62 (ASCLVLFPRFLGTAFMLWLL) threads the bilayer. The Extracellular portion of the chain corresponds to 63 to 304 (DFLCIRKHFL…QLHGTRPRRL (242 aa)). Sec-170 is an active-site residue. Position 170 (Sec-170) is a non-standard amino acid, selenocysteine.

The protein belongs to the iodothyronine deiodinase family. Monomer. Homodimer. May undergo minor heretodimerization with DIO1 and DIO2. In terms of tissue distribution, neonatal skin, placenta, skeletal muscle and cerebral cortex.

The protein resides in the cell membrane. The protein localises to the endosome membrane. The catalysed reaction is 3,3',5'-triiodo-L-thyronine + iodide + A + H(+) = L-thyroxine + AH2. It catalyses the reaction 3,3'-diiodo-L-thyronine + iodide + A + H(+) = 3,3',5-triiodo-L-thyronine + AH2. The enzyme catalyses 3-iodo-L-thyronine + iodide + A + H(+) = 3,5-diiodo-L-thyronine + AH2. It carries out the reaction L-thyronine + iodide + A + H(+) = 3-iodo-L-thyronine + AH2. The catalysed reaction is 3',5'-diiodo-L-thyronine + iodide + A + H(+) = 3,3',5'-triiodo-L-thyronine + AH2. It catalyses the reaction 3'-iodo-L-thyronine + iodide + A + H(+) = 3,3'-diiodo-L-thyronine + AH2. The enzyme catalyses 3,3',5'-triiodothyronamine + iodide + A + H(+) = 3,3',5,5'-tetraiodothyronamine + AH2. It carries out the reaction 3',5'-diiodothyronamine + iodide + A + H(+) = 3,3',5'-triiodothyronamine + AH2. The catalysed reaction is 3,3'-diiodothyronamine + iodide + A + H(+) = 3,3',5-triiodothyronamine + AH2. It catalyses the reaction 3-iodothyronamine + iodide + A + H(+) = 3,5-diiodothyronamine + AH2. The enzyme catalyses 3'-iodothyronamine + iodide + A + H(+) = 3,3'-diiodothyronamine + AH2. It carries out the reaction thyronamine + iodide + A + H(+) = 3-iodothyronamine + AH2. Functionally, plays a crucial role in the metabolism of thyroid hormones (TH) and has specific roles in TH activation and inactivation by deiodination. Catalyzes the deiodination of L-thyroxine (T4) to 3,3',5'-triiodothyronine (rT3), 3,5-diiodothyronine (3,5-T2) to 3-monoiodothyronine (3-T1), rT3 to 3',5'-diiodothyronine (3',5'-T2) and 3,3'-diiodothyronine (3,3'-T2) to 3'-monoiodothyronine (3'-T1) via inner-ring deiodination (IRD). Catalyzes the deiodination of 3,5,3'-triiodothyronine (T3) to 3,3'-diiodothyronine (3,3'-T2) via IRD. Catalyzes the deiodination of 3-T1 to L-thyronine (T0) via outer-ring deiodination (ORD). Catalyzes the tyrosyl ring deiodinations of T4AM (3,3',5,5'-tetraiodothyronamine), rT3AM (3,3',5'-triiodothyronamine), T3AM (3,5,3'-triiodothyronamine), 3,5-T2AM (3,5-diiodothyronamine), 3,3'-T2AM (3,3'-diiodothyronamine) and 3-T1AM (3-iodothyronamine). This chain is Thyroxine 5-deiodinase (Dio3), found in Rattus norvegicus (Rat).